The chain runs to 339 residues: Terpene synthase 7 (339 aa).

Positions 79–84 match the DDxx(x)D/E motif motif; the sequence is DDFLES. The short motif at 219–227 is the NDxxSxxxD/E motif element; the sequence is NDCASYAKE.

It belongs to the terpene synthase family.

The catalysed reaction is (2E,6E)-farnesyl diphosphate = (-)-beta-barbatene + diphosphate. In terms of biological role, terpene synthase that converts its substrate farnesyl diphosphate (FPP) into the sesquiterpene beta-barbatene. The polypeptide is Terpene synthase 7 (Dictyostelium discoideum (Social amoeba)).